The chain runs to 228 residues: 7-cyano-7-deazaguanine synthase (228 aa).

Residue 11 to 21 (LSGGLDSATCL) participates in ATP binding. Positions 191, 201, 204, and 207 each coordinate Zn(2+).

Belongs to the QueC family. It depends on Zn(2+) as a cofactor.

The enzyme catalyses 7-carboxy-7-deazaguanine + NH4(+) + ATP = 7-cyano-7-deazaguanine + ADP + phosphate + H2O + H(+). It functions in the pathway purine metabolism; 7-cyano-7-deazaguanine biosynthesis. Its function is as follows. Catalyzes the ATP-dependent conversion of 7-carboxy-7-deazaguanine (CDG) to 7-cyano-7-deazaguanine (preQ(0)). The sequence is that of 7-cyano-7-deazaguanine synthase from Azoarcus sp. (strain BH72).